The following is a 196-amino-acid chain: ATP-dependent Clp protease proteolytic subunit (196 aa).

Residue serine 101 is the Nucleophile of the active site. Residue histidine 126 is part of the active site.

Belongs to the peptidase S14 family. Component of the chloroplastic Clp protease core complex.

It is found in the plastid. It localises to the chloroplast stroma. It carries out the reaction Hydrolysis of proteins to small peptides in the presence of ATP and magnesium. alpha-casein is the usual test substrate. In the absence of ATP, only oligopeptides shorter than five residues are hydrolyzed (such as succinyl-Leu-Tyr-|-NHMec, and Leu-Tyr-Leu-|-Tyr-Trp, in which cleavage of the -Tyr-|-Leu- and -Tyr-|-Trp bonds also occurs).. Functionally, cleaves peptides in various proteins in a process that requires ATP hydrolysis. Has a chymotrypsin-like activity. Plays a major role in the degradation of misfolded proteins. This chain is ATP-dependent Clp protease proteolytic subunit, found in Atropa belladonna (Belladonna).